A 329-amino-acid polypeptide reads, in one-letter code: 4-hydroxythreonine-4-phosphate dehydrogenase (329 aa).

Substrate-binding residues include H136 and T137. A divalent metal cation is bound by residues H166, H211, and H266. 3 residues coordinate substrate: K274, N283, and R292.

It belongs to the PdxA family. In terms of assembly, homodimer. Zn(2+) serves as cofactor. Requires Mg(2+) as cofactor. Co(2+) is required as a cofactor.

The protein localises to the cytoplasm. The catalysed reaction is 4-(phosphooxy)-L-threonine + NAD(+) = 3-amino-2-oxopropyl phosphate + CO2 + NADH. It participates in cofactor biosynthesis; pyridoxine 5'-phosphate biosynthesis; pyridoxine 5'-phosphate from D-erythrose 4-phosphate: step 4/5. Functionally, catalyzes the NAD(P)-dependent oxidation of 4-(phosphooxy)-L-threonine (HTP) into 2-amino-3-oxo-4-(phosphooxy)butyric acid which spontaneously decarboxylates to form 3-amino-2-oxopropyl phosphate (AHAP). In Shigella boydii serotype 18 (strain CDC 3083-94 / BS512), this protein is 4-hydroxythreonine-4-phosphate dehydrogenase.